The chain runs to 255 residues: Hemin import ATP-binding protein HmuV (255 aa).

In terms of domain architecture, ABC transporter spans 2 to 238; the sequence is LDVEGLHLKR…AALNAVFGID (237 aa). 34–41 is a binding site for ATP; it reads GPNGAGKS.

It belongs to the ABC transporter superfamily. Heme (hemin) importer (TC 3.A.1.14.5) family. In terms of assembly, the complex is composed of two ATP-binding proteins (HmuV), two transmembrane proteins (HmuU) and a solute-binding protein (HmuT).

The protein localises to the cell inner membrane. Part of the ABC transporter complex HmuTUV involved in hemin import. Responsible for energy coupling to the transport system. The chain is Hemin import ATP-binding protein HmuV from Pseudomonas entomophila (strain L48).